A 426-amino-acid polypeptide reads, in one-letter code: Glutamate-1-semialdehyde 2,1-aminomutase (426 aa).

Lysine 265 bears the N6-(pyridoxal phosphate)lysine mark.

This sequence belongs to the class-III pyridoxal-phosphate-dependent aminotransferase family. HemL subfamily. In terms of assembly, homodimer. It depends on pyridoxal 5'-phosphate as a cofactor.

Its subcellular location is the cytoplasm. It carries out the reaction (S)-4-amino-5-oxopentanoate = 5-aminolevulinate. Its pathway is porphyrin-containing compound metabolism; protoporphyrin-IX biosynthesis; 5-aminolevulinate from L-glutamyl-tRNA(Glu): step 2/2. The protein is Glutamate-1-semialdehyde 2,1-aminomutase of Escherichia coli O157:H7.